The following is a 480-amino-acid chain: Dihydrolipoyllysine-residue acetyltransferase component 4 of pyruvate dehydrogenase complex, chloroplastic (480 aa).

The N-terminal 53 residues, 1–53 (MAVSSSSFLSTASLTNSKSNISFASSVSPSLRSVVFRSTTPATSHRRSMTVRS), are a transit peptide targeting the chloroplast. Positions 55–133 (IREIFMPALS…AAIGLLAETE (79 aa)) constitute a Lipoyl-binding domain. At Lys-96 the chain carries N6-lipoyllysine. 2 disordered regions span residues 140 to 168 (KSKA…SPAP) and 224 to 245 (AGIA…PVTA). A compositionally biased stretch (low complexity) spans 142–156 (KAASKSSSSVAEAVV). A Peripheral subunit-binding (PSBD) domain is found at 187–224 (VATPYAKKLAKQHKVDIESVAGTGPFGRITASDVETAA). Over residues 234 to 243 (APPPPPPPPV) the composition is skewed to pro residues. Residue His-453 is part of the active site.

This sequence belongs to the 2-oxoacid dehydrogenase family. The cofactor is (R)-lipoate.

It is found in the plastid. The protein localises to the chloroplast stroma. The enzyme catalyses N(6)-[(R)-dihydrolipoyl]-L-lysyl-[protein] + acetyl-CoA = N(6)-[(R)-S(8)-acetyldihydrolipoyl]-L-lysyl-[protein] + CoA. Functionally, the pyruvate dehydrogenase complex catalyzes the overall conversion of pyruvate to acetyl-CoA and CO(2). It contains multiple copies of three enzymatic components: pyruvate dehydrogenase (E1), dihydrolipoamide acetyltransferase (E2) and lipoamide dehydrogenase (E3). The chain is Dihydrolipoyllysine-residue acetyltransferase component 4 of pyruvate dehydrogenase complex, chloroplastic (LTA2) from Arabidopsis thaliana (Mouse-ear cress).